A 475-amino-acid chain; its full sequence is Ribulose bisphosphate carboxylase large chain (475 aa).

K14 bears the N6,N6,N6-trimethyllysine mark. Positions 123 and 173 each coordinate substrate. The active-site Proton acceptor is the K175. A substrate-binding site is contributed by K177. Residues K201, D203, and E204 each coordinate Mg(2+). K201 bears the N6-carboxylysine mark. The active-site Proton acceptor is H294. Substrate is bound by residues R295, H327, and S379.

This sequence belongs to the RuBisCO large chain family. Type I subfamily. Heterohexadecamer of 8 large chains and 8 small chains; disulfide-linked. The disulfide link is formed within the large subunit homodimers. Mg(2+) is required as a cofactor. Post-translationally, the disulfide bond which can form in the large chain dimeric partners within the hexadecamer appears to be associated with oxidative stress and protein turnover.

The protein resides in the plastid. The enzyme catalyses 2 (2R)-3-phosphoglycerate + 2 H(+) = D-ribulose 1,5-bisphosphate + CO2 + H2O. It catalyses the reaction D-ribulose 1,5-bisphosphate + O2 = 2-phosphoglycolate + (2R)-3-phosphoglycerate + 2 H(+). Its function is as follows. RuBisCO catalyzes two reactions: the carboxylation of D-ribulose 1,5-bisphosphate, the primary event in carbon dioxide fixation, as well as the oxidative fragmentation of the pentose substrate in the photorespiration process. Both reactions occur simultaneously and in competition at the same active site. This Euglena longa (Euglenophycean alga) protein is Ribulose bisphosphate carboxylase large chain (rbcL).